Reading from the N-terminus, the 217-residue chain is GrpE protein homolog 1, mitochondrial (217 aa).

Residues 1–27 (MAARCVRLARGSLPAFALSLRSSPRLL) constitute a mitochondrion transit peptide. N6-acetyllysine; alternate is present on Lys94. N6-succinyllysine; alternate is present on Lys94. The residue at position 100 (Lys100) is an N6-acetyllysine. Lys120 is subject to N6-succinyllysine. Lys215 is modified (N6-acetyllysine; alternate). The residue at position 215 (Lys215) is an N6-succinyllysine; alternate.

This sequence belongs to the GrpE family. Probable component of the PAM complex at least composed of a mitochondrial HSP70 protein, GRPEL1 or GRPEL2, TIMM44, TIMM16/PAM16 and TIMM14/DNAJC19. Binds to HSP70, HSC70 and HSJ1B.

The protein resides in the mitochondrion matrix. Functionally, essential component of the PAM complex, a complex required for the translocation of transit peptide-containing proteins from the inner membrane into the mitochondrial matrix in an ATP-dependent manner. Seems to control the nucleotide-dependent binding of mitochondrial HSP70 to substrate proteins. This chain is GrpE protein homolog 1, mitochondrial (GRPEL1), found in Bos taurus (Bovine).